The primary structure comprises 51 residues: Large ribosomal subunit protein bL33 (51 aa).

The protein belongs to the bacterial ribosomal protein bL33 family.

The sequence is that of Large ribosomal subunit protein bL33 from Marinobacter nauticus (strain ATCC 700491 / DSM 11845 / VT8) (Marinobacter aquaeolei).